A 509-amino-acid polypeptide reads, in one-letter code: ATP synthase subunit alpha (509 aa).

169-176 (GDRQTGKT) lines the ATP pocket.

Belongs to the ATPase alpha/beta chains family. In terms of assembly, F-type ATPases have 2 components, CF(1) - the catalytic core - and CF(0) - the membrane proton channel. CF(1) has five subunits: alpha(3), beta(3), gamma(1), delta(1), epsilon(1). CF(0) has three main subunits: a(1), b(2) and c(9-12). The alpha and beta chains form an alternating ring which encloses part of the gamma chain. CF(1) is attached to CF(0) by a central stalk formed by the gamma and epsilon chains, while a peripheral stalk is formed by the delta and b chains.

It localises to the cell inner membrane. The catalysed reaction is ATP + H2O + 4 H(+)(in) = ADP + phosphate + 5 H(+)(out). Produces ATP from ADP in the presence of a proton gradient across the membrane. The alpha chain is a regulatory subunit. The sequence is that of ATP synthase subunit alpha from Chelativorans sp. (strain BNC1).